Here is a 330-residue protein sequence, read N- to C-terminus: Cytoskeleton protein RodZ (330 aa).

The Cytoplasmic segment spans residues 1-111 (MNTEATQDHQ…LGKRRKKRDG (111 aa)). The HTH cro/C1-type domain maps to 19 to 71 (LRHAREQLGLSQQAVAERLCLKVSTVRDIEDDKAPADLASTFLRGYIRSYARL). The segment at residues 30–49 (QQAVAERLCLKVSTVRDIED) is a DNA-binding region (H-T-H motif). A helical; Signal-anchor for type II membrane protein transmembrane segment spans residues 112–132 (WLMSFTWLVLFVVIGLSGAWW). Over 133 to 330 (WQDHKAQQEE…TLNAEQSPAQ (198 aa)) the chain is Periplasmic. Residues 146–166 (MADQSSAELNGGDANSQNVPL) are compositionally biased toward polar residues. A disordered region spans residues 146–237 (MADQSSAELN…ASPLPTDQAN (92 aa)). Composition is skewed to low complexity over residues 176 to 202 (TDSAANSAPTDTASTPTTSAPAQTPAD) and 216 to 233 (TAGTAPTTPATPASPLPT).

It belongs to the RodZ family.

It localises to the cell inner membrane. In terms of biological role, cytoskeletal protein that is involved in cell-shape control through regulation of the length of the long axis. This is Cytoskeleton protein RodZ from Klebsiella pneumoniae (strain 342).